The sequence spans 318 residues: Methionyl-tRNA formyltransferase (318 aa).

Position 112–115 (112–115) interacts with (6S)-5,6,7,8-tetrahydrofolate; it reads SLLP.

The protein belongs to the Fmt family.

It carries out the reaction L-methionyl-tRNA(fMet) + (6R)-10-formyltetrahydrofolate = N-formyl-L-methionyl-tRNA(fMet) + (6S)-5,6,7,8-tetrahydrofolate + H(+). In terms of biological role, attaches a formyl group to the free amino group of methionyl-tRNA(fMet). The formyl group appears to play a dual role in the initiator identity of N-formylmethionyl-tRNA by promoting its recognition by IF2 and preventing the misappropriation of this tRNA by the elongation apparatus. The sequence is that of Methionyl-tRNA formyltransferase from Citrifermentans bemidjiense (strain ATCC BAA-1014 / DSM 16622 / JCM 12645 / Bem) (Geobacter bemidjiensis).